Consider the following 129-residue polypeptide: Small ribosomal subunit protein uS11 (129 aa).

It belongs to the universal ribosomal protein uS11 family. As to quaternary structure, part of the 30S ribosomal subunit. Interacts with proteins S7 and S18. Binds to IF-3.

In terms of biological role, located on the platform of the 30S subunit, it bridges several disparate RNA helices of the 16S rRNA. Forms part of the Shine-Dalgarno cleft in the 70S ribosome. This is Small ribosomal subunit protein uS11 from Nitratidesulfovibrio vulgaris (strain ATCC 29579 / DSM 644 / CCUG 34227 / NCIMB 8303 / VKM B-1760 / Hildenborough) (Desulfovibrio vulgaris).